We begin with the raw amino-acid sequence, 279 residues long: Biotin synthase (279 aa).

The Radical SAM core domain occupies 1–227 (MKVYLCAISN…NAMIMVAGGR (227 aa)). Positions 16, 20, and 23 each coordinate [4Fe-4S] cluster. Positions 60, 95, and 153 each coordinate [2Fe-2S] cluster.

Belongs to the radical SAM superfamily. Biotin synthase family. Homodimer. [4Fe-4S] cluster serves as cofactor. The cofactor is [2Fe-2S] cluster.

It catalyses the reaction (4R,5S)-dethiobiotin + (sulfur carrier)-SH + 2 reduced [2Fe-2S]-[ferredoxin] + 2 S-adenosyl-L-methionine = (sulfur carrier)-H + biotin + 2 5'-deoxyadenosine + 2 L-methionine + 2 oxidized [2Fe-2S]-[ferredoxin]. The protein operates within cofactor biosynthesis; biotin biosynthesis; biotin from 7,8-diaminononanoate: step 2/2. In terms of biological role, catalyzes the conversion of dethiobiotin (DTB) to biotin by the insertion of a sulfur atom into dethiobiotin via a radical-based mechanism. The protein is Biotin synthase of Nitratiruptor sp. (strain SB155-2).